A 241-amino-acid polypeptide reads, in one-letter code: Phosphoribosylaminoimidazole-succinocarboxamide synthase (241 aa).

The protein belongs to the SAICAR synthetase family.

It carries out the reaction 5-amino-1-(5-phospho-D-ribosyl)imidazole-4-carboxylate + L-aspartate + ATP = (2S)-2-[5-amino-1-(5-phospho-beta-D-ribosyl)imidazole-4-carboxamido]succinate + ADP + phosphate + 2 H(+). The protein operates within purine metabolism; IMP biosynthesis via de novo pathway; 5-amino-1-(5-phospho-D-ribosyl)imidazole-4-carboxamide from 5-amino-1-(5-phospho-D-ribosyl)imidazole-4-carboxylate: step 1/2. In Lacticaseibacillus paracasei (strain ATCC 334 / BCRC 17002 / CCUG 31169 / CIP 107868 / KCTC 3260 / NRRL B-441) (Lactobacillus paracasei), this protein is Phosphoribosylaminoimidazole-succinocarboxamide synthase.